A 1027-amino-acid chain; its full sequence is Presequence protease, mitochondrial (1027 aa).

Residues 1 to 22 (MIRQCWAGLRLCRALYQTSYRW) constitute a mitochondrion transit peptide. Residue H98 coordinates Zn(2+). Residue E101 is the Proton acceptor of the active site. 2 residues coordinate Zn(2+): H102 and E199. A disulfide bond links C113 and C550. The disordered stretch occupies residues 803–827 (RKAIRPHVVEKSSNPSPSGSEISRT). The span at 814-825 (SSNPSPSGSEIS) shows a compositional bias: low complexity.

Belongs to the peptidase M16 family. PreP subfamily. In terms of assembly, monomer and homodimer; homodimerization is induced by binding of the substrate. Zn(2+) is required as a cofactor. A disulfide bond locks the enzyme in the closed conformation preventing substrate entry into the catalytic chamber.

The protein localises to the mitochondrion matrix. Mainly exists in a closed and catalytically competent conformation but a closed-to-open switch allows substrate entry into the catalytic chamber. Substrate binding induces closure and dimerization. A disulfide bond may lock the enzyme in a closed conformation preventing substrate entry into the catalytic chamber, participating in redox regulation of the enzyme. Inhibited by metal-chelating agents. Inhibited by nickel and zinc excess, and slightly activated by manganese. Metalloendopeptidase of the mitochondrial matrix that functions in peptide cleavage and degradation rather than in protein processing. Has an ATP-independent activity. Specifically cleaves peptides in the range of 5 to 65 residues. Shows a preference for cleavage after small polar residues and before basic residues, but without any positional preference. Degrades the transit peptides of mitochondrial proteins after their cleavage. Also degrades other unstructured peptides. This chain is Presequence protease, mitochondrial (pitrm1), found in Xenopus laevis (African clawed frog).